Reading from the N-terminus, the 79-residue chain is Cell division protein ZapB (79 aa).

Positions 3 to 79 (LEVFEKLEAK…QALLGRMEEV (77 aa)) form a coiled coil.

It belongs to the ZapB family. As to quaternary structure, homodimer. The ends of the coiled-coil dimer bind to each other, forming polymers. Interacts with FtsZ.

The protein localises to the cytoplasm. Its function is as follows. Non-essential, abundant cell division factor that is required for proper Z-ring formation. It is recruited early to the divisome by direct interaction with FtsZ, stimulating Z-ring assembly and thereby promoting cell division earlier in the cell cycle. Its recruitment to the Z-ring requires functional FtsA or ZipA. The chain is Cell division protein ZapB from Salmonella typhi.